The chain runs to 317 residues: Ribosomal protein L11 methyltransferase (317 aa).

The S-adenosyl-L-methionine site is built by Thr158, Gly179, Asp201, and Asn244.

Belongs to the methyltransferase superfamily. PrmA family.

It localises to the cytoplasm. The enzyme catalyses L-lysyl-[protein] + 3 S-adenosyl-L-methionine = N(6),N(6),N(6)-trimethyl-L-lysyl-[protein] + 3 S-adenosyl-L-homocysteine + 3 H(+). In terms of biological role, methylates ribosomal protein L11. The sequence is that of Ribosomal protein L11 methyltransferase from Streptococcus thermophilus (strain CNRZ 1066).